A 224-amino-acid polypeptide reads, in one-letter code: Ribonuclease 3 (224 aa).

The region spanning 5–127 (LERLCRRLNY…ILAAIYLDGG (123 aa)) is the RNase III domain. A Mg(2+)-binding site is contributed by glutamate 40. Residue aspartate 44 is part of the active site. Mg(2+) contacts are provided by aspartate 113 and glutamate 116. Glutamate 116 is a catalytic residue. In terms of domain architecture, DRBM spans 154–224 (DAKTQLQEFL…AKAMLEQLQG (71 aa)).

This sequence belongs to the ribonuclease III family. Homodimer. Mg(2+) is required as a cofactor.

The protein localises to the cytoplasm. It carries out the reaction Endonucleolytic cleavage to 5'-phosphomonoester.. In terms of biological role, digests double-stranded RNA. Involved in the processing of primary rRNA transcript to yield the immediate precursors to the large and small rRNAs (23S and 16S). Processes some mRNAs, and tRNAs when they are encoded in the rRNA operon. Processes pre-crRNA and tracrRNA of type II CRISPR loci if present in the organism. The sequence is that of Ribonuclease 3 from Legionella pneumophila (strain Lens).